A 91-amino-acid chain; its full sequence is DNA-directed RNA polymerase subunit omega (91 aa).

It belongs to the RNA polymerase subunit omega family. As to quaternary structure, the RNAP catalytic core consists of 2 alpha, 1 beta, 1 beta' and 1 omega subunit. When a sigma factor is associated with the core the holoenzyme is formed, which can initiate transcription.

It carries out the reaction RNA(n) + a ribonucleoside 5'-triphosphate = RNA(n+1) + diphosphate. In terms of biological role, promotes RNA polymerase assembly. Latches the N- and C-terminal regions of the beta' subunit thereby facilitating its interaction with the beta and alpha subunits. This Aeromonas hydrophila subsp. hydrophila (strain ATCC 7966 / DSM 30187 / BCRC 13018 / CCUG 14551 / JCM 1027 / KCTC 2358 / NCIMB 9240 / NCTC 8049) protein is DNA-directed RNA polymerase subunit omega.